A 97-amino-acid polypeptide reads, in one-letter code: Aspartyl/glutamyl-tRNA(Asn/Gln) amidotransferase subunit C (97 aa).

Belongs to the GatC family. Heterotrimer of A, B and C subunits.

It carries out the reaction L-glutamyl-tRNA(Gln) + L-glutamine + ATP + H2O = L-glutaminyl-tRNA(Gln) + L-glutamate + ADP + phosphate + H(+). The enzyme catalyses L-aspartyl-tRNA(Asn) + L-glutamine + ATP + H2O = L-asparaginyl-tRNA(Asn) + L-glutamate + ADP + phosphate + 2 H(+). Functionally, allows the formation of correctly charged Asn-tRNA(Asn) or Gln-tRNA(Gln) through the transamidation of misacylated Asp-tRNA(Asn) or Glu-tRNA(Gln) in organisms which lack either or both of asparaginyl-tRNA or glutaminyl-tRNA synthetases. The reaction takes place in the presence of glutamine and ATP through an activated phospho-Asp-tRNA(Asn) or phospho-Glu-tRNA(Gln). In Listeria innocua serovar 6a (strain ATCC BAA-680 / CLIP 11262), this protein is Aspartyl/glutamyl-tRNA(Asn/Gln) amidotransferase subunit C.